A 195-amino-acid polypeptide reads, in one-letter code: Mannitol operon repressor (195 aa).

Belongs to the MtlR/FumE family. As to quaternary structure, homodimer. Can also form higher level multimer aggregates.

In terms of biological role, involved in the repression of the expression of the mannitol mtlADR operon. Does not bind the operator/promoter regulatory region of this operon. Therefore, seems to belong to a new class of transcription factors in bacteria that may regulate gene expression indirectly, perhaps as a part of a larger transcriptional complex. In Escherichia coli O6:H1 (strain CFT073 / ATCC 700928 / UPEC), this protein is Mannitol operon repressor.